The following is a 153-amino-acid chain: UPF0756 membrane protein Bcer98_3279 (153 aa).

Helical transmembrane passes span 8 to 28 (FLFILLIIGLIAKNQSLIVAI), 54 to 74 (LGVTVITIAVLVPIATGEIGF), 87 to 107 (WIALASGIAVALLAKGGLQLL), and 117 to 137 (LVFGTIIAVALFNGVAVGPLI).

Belongs to the UPF0756 family.

The protein localises to the cell membrane. The chain is UPF0756 membrane protein Bcer98_3279 from Bacillus cytotoxicus (strain DSM 22905 / CIP 110041 / 391-98 / NVH 391-98).